The following is a 345-amino-acid chain: AP2-like ethylene-responsive transcription factor At1g16060 (345 aa).

The segment at 15-62 is disordered; it reads TRQSKKTSVENETGDDQSATSVVLKAKRKRRSQPRDAPPQRSSVHRGV. 2 consecutive DNA-binding regions (AP2/ERF) follow at residues 58 to 124 and 160 to 218; these read VHRG…LNFP and KYRG…TNFD. The interval 243–302 is disordered; sequence HSDLSPFIKPNHESDLSQSQSSSEDNDDRKTKLLKSSPLVAEEVIGPSTPPEIAPPRRSF.

The protein belongs to the AP2/ERF transcription factor family. AP2 subfamily.

The protein localises to the nucleus. In terms of biological role, probably acts as a transcriptional activator. Binds to the GCC-box pathogenesis-related promoter element. May be involved in the regulation of gene expression by stress factors and by components of stress signal transduction pathways. This chain is AP2-like ethylene-responsive transcription factor At1g16060, found in Arabidopsis thaliana (Mouse-ear cress).